The chain runs to 176 residues: 2-C-methyl-D-erythritol 2,4-cyclodiphosphate synthase (176 aa).

Positions 23, 25, and 60 each coordinate a divalent metal cation. Position 23–25 (D23–H25) interacts with 4-CDP-2-C-methyl-D-erythritol 2-phosphate. 4-CDP-2-C-methyl-D-erythritol 2-phosphate is bound at residue T149–E152.

The protein belongs to the IspF family. As to quaternary structure, homotrimer. The cofactor is a divalent metal cation.

It carries out the reaction 4-CDP-2-C-methyl-D-erythritol 2-phosphate = 2-C-methyl-D-erythritol 2,4-cyclic diphosphate + CMP. It functions in the pathway isoprenoid biosynthesis; isopentenyl diphosphate biosynthesis via DXP pathway; isopentenyl diphosphate from 1-deoxy-D-xylulose 5-phosphate: step 4/6. Its function is as follows. Involved in the biosynthesis of isopentenyl diphosphate (IPP) and dimethylallyl diphosphate (DMAPP), two major building blocks of isoprenoid compounds. Catalyzes the conversion of 4-diphosphocytidyl-2-C-methyl-D-erythritol 2-phosphate (CDP-ME2P) to 2-C-methyl-D-erythritol 2,4-cyclodiphosphate (ME-CPP) with a corresponding release of cytidine 5-monophosphate (CMP). The sequence is that of 2-C-methyl-D-erythritol 2,4-cyclodiphosphate synthase from Chlamydia felis (strain Fe/C-56) (Chlamydophila felis).